A 110-amino-acid polypeptide reads, in one-letter code: U1-lycotoxin-Ls1gg (110 aa).

The signal sequence occupies residues 1 to 20 (MKFVLLFGVLLVTLFSYSSA). Positions 21-44 (EMLDDFDQADEDELLSLIEKEEAR) are excised as a propeptide. 3 cysteine pairs are disulfide-bonded: cysteine 54/cysteine 71, cysteine 61/cysteine 89, and cysteine 73/cysteine 87.

This sequence belongs to the neurotoxin 19 (CSTX) family. 03 subfamily. As to expression, expressed by the venom gland.

Its subcellular location is the secreted. This Lycosa singoriensis (Wolf spider) protein is U1-lycotoxin-Ls1gg.